Consider the following 358-residue polypeptide: G-protein coupled receptor 87 (358 aa).

Topologically, residues Met1 to Val47 are extracellular. Residues Asn4, Asn24, and Asn33 are each glycosylated (N-linked (GlcNAc...) asparagine). Residues Leu48 to Phe68 form a helical membrane-spanning segment. The Cytoplasmic segment spans residues His69–Ser75. The helical transmembrane segment at Phe76 to Phe96 threads the bilayer. The Extracellular portion of the chain corresponds to Arg97 to Tyr116. Cysteines 114 and 192 form a disulfide. The chain crosses the membrane as a helical span at residues Thr117–Val137. Residues Asp138–Lys159 are Cytoplasmic-facing. The helical transmembrane segment at Val160 to Thr180 threads the bilayer. The Extracellular segment spans residues Asn181 to Thr208. A helical membrane pass occupies residues Tyr209–Ile229. The Cytoplasmic segment spans residues Ser230–Val256. A helical membrane pass occupies residues Val257–Phe277. Topologically, residues Ser278–Glu297 are extracellular. Residues Met298–Cys318 traverse the membrane as a helical segment. The Cytoplasmic portion of the chain corresponds to Lys319–Val358.

Belongs to the G-protein coupled receptor 1 family. Expressed at high levels in testis and brain and to a lesser extent placenta, ovary, prostate, and skeletal muscle but not in heart, lung, kidney, liver or intestine.

It is found in the cell membrane. Receptor for lysophosphatidic acid (LPA). Necessary for p53/TP53-dependent survival in response to DNA damage. Promotes the Hippo-YAP signaling pathway and thereby modulates glycolysis and oxidative stress production by the regulation of hexokinase-2/HK2. This chain is G-protein coupled receptor 87 (Gpr87), found in Mus musculus (Mouse).